Consider the following 312-residue polypeptide: Olfactory receptor 2J1 (312 aa).

Over 1-26 the chain is Extracellular; sequence MLMKKNASFEDFFLLLGFSNWPHLEV. N-linked (GlcNAc...) asparagine glycosylation is present at N6. The helical transmembrane segment at 27-50 threads the bilayer; the sequence is VLFVVILIFYLITLIGNLFIIILS. Over 51-58 the chain is Cytoplasmic; the sequence is YLDSHLHT. The helical transmembrane segment at 59–80 threads the bilayer; it reads PMYFFLSNLSFLDLCYTTSSIP. The Extracellular segment spans residues 81–101; sequence QLLVNLWGPEKTISYAGCTVQ. C98 and C190 form a disulfide bridge. Residues 102 to 121 form a helical membrane-spanning segment; it reads LYFVLALGTAECVLLVVMSY. Residues 122-140 lie on the Cytoplasmic side of the membrane; it reads DRYAAVCRPLHYTVLMHPR. The chain crosses the membrane as a helical span at residues 141–159; it reads FCRLLAAASWVSGFTTSAL. Over 160–196 the chain is Extracellular; sequence HSSFTFWIPLCRHRLVDHFFCEVPALLRLSCVDTQAN. The helical transmembrane segment at 197–220 threads the bilayer; that stretch reads ELTLMVMSSIFVLIPLILILTSYG. At 221–237 the chain is on the cytoplasmic side; the sequence is AIARAVLSMQSTTGLQK. A helical transmembrane segment spans residues 238–260; sequence VLRTCGAHLMVVSLFFIPVMCMY. The Extracellular portion of the chain corresponds to 261-273; that stretch reads LQPPSENSQDQGK. A helical transmembrane segment spans residues 274–293; the sequence is FIALFYTVVTPSLNPLIYTF. The Cytoplasmic segment spans residues 294 to 312; it reads RNKDVRGAVKRLMGWEWGM.

It belongs to the G-protein coupled receptor 1 family.

Its subcellular location is the cell membrane. Odorant receptor. The polypeptide is Olfactory receptor 2J1 (OR2J1) (Homo sapiens (Human)).